Reading from the N-terminus, the 164-residue chain is 2-C-methyl-D-erythritol 2,4-cyclodiphosphate synthase (164 aa).

2 residues coordinate a divalent metal cation: aspartate 9 and histidine 11. 4-CDP-2-C-methyl-D-erythritol 2-phosphate contacts are provided by residues 9 to 11 (DVH) and 35 to 36 (HS). Histidine 43 is an a divalent metal cation binding site. 4-CDP-2-C-methyl-D-erythritol 2-phosphate contacts are provided by residues 57 to 59 (DIG), 62 to 66 (FPDTD), 133 to 136 (TTTE), phenylalanine 140, and arginine 143.

It belongs to the IspF family. As to quaternary structure, homotrimer. Requires a divalent metal cation as cofactor.

The enzyme catalyses 4-CDP-2-C-methyl-D-erythritol 2-phosphate = 2-C-methyl-D-erythritol 2,4-cyclic diphosphate + CMP. It functions in the pathway isoprenoid biosynthesis; isopentenyl diphosphate biosynthesis via DXP pathway; isopentenyl diphosphate from 1-deoxy-D-xylulose 5-phosphate: step 4/6. Its function is as follows. Involved in the biosynthesis of isopentenyl diphosphate (IPP) and dimethylallyl diphosphate (DMAPP), two major building blocks of isoprenoid compounds. Catalyzes the conversion of 4-diphosphocytidyl-2-C-methyl-D-erythritol 2-phosphate (CDP-ME2P) to 2-C-methyl-D-erythritol 2,4-cyclodiphosphate (ME-CPP) with a corresponding release of cytidine 5-monophosphate (CMP). This chain is 2-C-methyl-D-erythritol 2,4-cyclodiphosphate synthase, found in Syntrophotalea carbinolica (strain DSM 2380 / NBRC 103641 / GraBd1) (Pelobacter carbinolicus).